Reading from the N-terminus, the 236-residue chain is tRNA (guanine-N(7)-)-methyltransferase (236 aa).

The span at 1 to 17 (MSERKSDPDRDDSERAF) shows a compositional bias: basic and acidic residues. Residues 1 to 23 (MSERKSDPDRDDSERAFFGRRKG) are disordered. Residues E67, E92, D119, and D141 each contribute to the S-adenosyl-L-methionine site. Residue D141 is part of the active site. Substrate-binding residues include K145 and D177.

The protein belongs to the class I-like SAM-binding methyltransferase superfamily. TrmB family.

The catalysed reaction is guanosine(46) in tRNA + S-adenosyl-L-methionine = N(7)-methylguanosine(46) in tRNA + S-adenosyl-L-homocysteine. The protein operates within tRNA modification; N(7)-methylguanine-tRNA biosynthesis. Catalyzes the formation of N(7)-methylguanine at position 46 (m7G46) in tRNA. The protein is tRNA (guanine-N(7)-)-methyltransferase of Bradyrhizobium diazoefficiens (strain JCM 10833 / BCRC 13528 / IAM 13628 / NBRC 14792 / USDA 110).